A 95-amino-acid chain; its full sequence is DNA-directed RNA polymerase subunit Rpo11 (95 aa).

This sequence belongs to the archaeal Rpo11/eukaryotic RPB11/RPC19 RNA polymerase subunit family. In terms of assembly, part of the RNA polymerase complex.

It localises to the cytoplasm. It catalyses the reaction RNA(n) + a ribonucleoside 5'-triphosphate = RNA(n+1) + diphosphate. Functionally, DNA-dependent RNA polymerase (RNAP) catalyzes the transcription of DNA into RNA using the four ribonucleoside triphosphates as substrates. The polypeptide is DNA-directed RNA polymerase subunit Rpo11 (Pyrococcus horikoshii (strain ATCC 700860 / DSM 12428 / JCM 9974 / NBRC 100139 / OT-3)).